Here is an 87-residue protein sequence, read N- to C-terminus: Small ribosomal subunit protein bS20 (87 aa).

This sequence belongs to the bacterial ribosomal protein bS20 family.

Its function is as follows. Binds directly to 16S ribosomal RNA. The protein is Small ribosomal subunit protein bS20 of Clostridium beijerinckii (strain ATCC 51743 / NCIMB 8052) (Clostridium acetobutylicum).